An 854-amino-acid chain; its full sequence is Protein SEY1 homolog (854 aa).

The Cytoplasmic segment spans residues 1 to 724 (MAAFSGETAV…LRNIESGKQS (724 aa)). Residues 49 to 291 (GVNYHVVGVF…NSNFLFSNCS (243 aa)) form the GB1/RHD3-type G domain. Residue 59 to 66 (GGQSSGKS) participates in GTP binding. Residues 336 to 386 (KHAAIEEFKEVCEEYTKKIQRGDVIPQFTRALEETIERLLKNFSDQTKLYK) adopt a coiled-coil conformation. The helical transmembrane segment at 725-745 (LPPWVLPVMLLLGWNELYYLL) threads the bilayer. The Lumenal segment spans residues 746-748 (TSP). A helical membrane pass occupies residues 749–769 (ILLIAIIVIAVLFFKTFLKSQ). The Cytoplasmic portion of the chain corresponds to 770 to 854 (LEVLEEKCPV…CRESRDKGED (85 aa)). The tract at residues 808–854 (GGGGAQFRDPTQATSVSGASAGVSSESSSAASPRRRVCRESRDKGED) is disordered. The segment covering 822 to 839 (SVSGASAGVSSESSSAAS) has biased composition (low complexity). Basic and acidic residues predominate over residues 845–854 (CRESRDKGED).

This sequence belongs to the TRAFAC class dynamin-like GTPase superfamily. GB1/RHD3 GTPase family. RHD3 subfamily.

It localises to the endoplasmic reticulum membrane. In terms of biological role, probable GTP-binding protein that may be involved in cell development. The sequence is that of Protein SEY1 homolog from Trypanosoma brucei brucei (strain 927/4 GUTat10.1).